The chain runs to 283 residues: MAISAAQVKELRDRTGAGMMDCKKALEETNGDMELAIDNMRKSGAAKAAKKAGNIAADGTILIKNGEGFAVLLEVNCQTDFVAKDANFLGFANSVLDVAAASKVALEDLKAQFEEARVALVAKIGENINVRRVEYIDGAKLASYRHGERIGVVVTGDADDETLKHIAMHVAASKPEYVNPEDVPADVVAREQALQIEISMNEGKPADIAEKMVVGRMKKFTGEISLTGQAYIMEPKKTVGEFLKEKGAKVTNFIRLEVGEGIEKKEEDFAAEVAAQIAASKKA.

Positions Thr-79–Val-82 are involved in Mg(2+) ion dislocation from EF-Tu.

This sequence belongs to the EF-Ts family.

It is found in the cytoplasm. In terms of biological role, associates with the EF-Tu.GDP complex and induces the exchange of GDP to GTP. It remains bound to the aminoacyl-tRNA.EF-Tu.GTP complex up to the GTP hydrolysis stage on the ribosome. The polypeptide is Elongation factor Ts (Shewanella putrefaciens (strain CN-32 / ATCC BAA-453)).